Reading from the N-terminus, the 1372-residue chain is Serine protease pic autotransporter (1372 aa).

The first 55 residues, 1–55 (MNKVYSLKYCPVTGGLIAVSELARRVIKKTCRRLTHILLAGIPAICLCYSQISQA), serve as a signal peptide directing secretion. Positions 56–301 (GIVRSDIAYQ…NVIPTDYLNQ (246 aa)) constitute a Peptidase S6 domain. Active-site charge relay system residues include H127, D155, and S258. Residues 1106–1372 (DTNGDAGAWA…AVNANFRYMF (267 aa)) form the Autotransporter domain.

Post-translationally, cleaved to release the mature protein from the outer membrane.

It localises to the periplasm. The protein resides in the secreted. It is found in the cell surface. Its subcellular location is the cell outer membrane. Its function is as follows. Involved in intestinal colonization, displays in vitro mucinolytic activity, serum resistance, and hemagglutination. Important to penetrate the intestinal mucus layer. This chain is Serine protease pic autotransporter (pic), found in Shigella flexneri.